Here is a 156-residue protein sequence, read N- to C-terminus: Small ribosomal subunit protein uS7 (156 aa).

The protein belongs to the universal ribosomal protein uS7 family. In terms of assembly, part of the 30S ribosomal subunit. Contacts proteins S9 and S11.

In terms of biological role, one of the primary rRNA binding proteins, it binds directly to 16S rRNA where it nucleates assembly of the head domain of the 30S subunit. Is located at the subunit interface close to the decoding center, probably blocks exit of the E-site tRNA. This Renibacterium salmoninarum (strain ATCC 33209 / DSM 20767 / JCM 11484 / NBRC 15589 / NCIMB 2235) protein is Small ribosomal subunit protein uS7.